The chain runs to 1037 residues: Sodium/potassium exporting P-type ATPase cta3 (1037 aa).

Over 1 to 61 (MVTINISNPV…GVSAWKVLLR (61 aa)) the chain is Cytoplasmic. A helical membrane pass occupies residues 62–82 (QVLNAMCVVLILAAALSFGTT). Asp-83 is a topological domain (extracellular). The chain crosses the membrane as a helical span at residues 84-104 (WIEGGVISAIIVLNITVGFIQ). Over 105–281 (EYKAEKTMDS…LNVGTPLQRK (177 aa)) the chain is Cytoplasmic. A helical transmembrane segment spans residues 282–302 (LTVLAYILFCIAIILAIIVMA). Over 303–313 (AHSFHVTNEVS) the chain is Extracellular. Residues 314 to 334 (IYAISLGISIIPESLIAVLSI) traverse the membrane as a helical segment. The Cytoplasmic portion of the chain corresponds to 335-760 (TMAMGQKNMS…GRRMFDNIMR (426 aa)). Asp-368 acts as the 4-aspartylphosphate intermediate in catalysis. Mg(2+)-binding residues include Asp-368 and Thr-370. 9 residues coordinate ATP: Thr-370, Glu-468, Lys-520, Arg-559, Thr-620, Gly-621, Asp-622, Arg-678, and Lys-684. Asp-703 contacts Mg(2+). Asn-706 lines the ATP pocket. The chain crosses the membrane as a helical span at residues 761–781 (FVLHLLVSNVGEVILLVVGLA). Topologically, residues 782-787 (FRDEVH) are extracellular. A helical transmembrane segment spans residues 788 to 808 (LSVFPMSPVEILWCNMITSSF). Residues 809–844 (PSMGLGMELAQPDVMERLPHDNKVGIFQKSLIVDMM) are Cytoplasmic-facing. The chain crosses the membrane as a helical span at residues 845–865 (VYGFFLGVVSLMTWVVIMYGF). The Extracellular portion of the chain corresponds to 866-889 (GTGNLSYDCNAHYHAGCNDVFKAR). A glycan (N-linked (GlcNAc...) asparagine) is linked at Asn-869. The helical transmembrane segment at 890 to 910 (SAVFAVVTFCILIMAVEVKNF) threads the bilayer. At 911–939 (DNSLFNLHGIPWGEWNFRYFLHTLVENKF) the chain is on the cytoplasmic side. A helical membrane pass occupies residues 940–960 (LAWAIALAAVSVFPTIYIPVI). The Extracellular portion of the chain corresponds to 961–969 (NRDVFKHTY). The helical transmembrane segment at 970-990 (IGWEWGVVAVAVMFYFFYVEI) threads the bilayer. At 991 to 1037 (WKSIRRSLTNPQKKGKFRRTLSNTITTESKLSEKDLEHRLFLQSRRA) the chain is on the cytoplasmic side. Ser-1012 carries the phosphoserine modification.

This sequence belongs to the cation transport ATPase (P-type) (TC 3.A.3) family. Type IID subfamily. Mg(2+) is required as a cofactor. The active site is phosphorylated in presence of sodium or potassium and in conditions of higher pH. Not phosphorylated in presence of calcium ions.

It is found in the cell membrane. It carries out the reaction Na(+)(in) + ATP + H2O = Na(+)(out) + ADP + phosphate + H(+). It catalyses the reaction K(+)(in) + ATP + H2O = K(+)(out) + ADP + phosphate + H(+). Functionally, catalyzes the hydrolysis of ATP coupled with the export of sodium and potassium from the cell. May export sodium less efficiently. May transport other cations such as lithium. Sodium/potassium efflux ATPases are involved in salt tolerance and maintaining the membrane potential across the plasma membrane in high salinity (Na+) or alkaline (K+) environments. In Schizosaccharomyces pombe (strain 972 / ATCC 24843) (Fission yeast), this protein is Sodium/potassium exporting P-type ATPase cta3.